The primary structure comprises 647 residues: C2H2 finger domain transcription factor USV101 (647 aa).

The span at Met1 to Ala10 shows a compositional bias: basic and acidic residues. Residues Met1 to Pro132 are disordered. 2 stretches are compositionally biased toward polar residues: residues Glu27–Gln54 and Ser66–Tyr84. Residues Pro97–Ser122 are compositionally biased toward low complexity. 2 consecutive C2H2-type zinc fingers follow at residues Phe144 to His169 and Phe175 to His197. Positions Gln220–Gln647 are disordered. Positions Ala222 to Lys248 are enriched in basic and acidic residues. A compositionally biased stretch (low complexity) spans Ala249–Ala259. A compositionally biased stretch (polar residues) spans Gly261 to Asn278. Low complexity-rich tracts occupy residues Ser312–Ala327, His404–Ala414, and Gly421–Pro434. Positions Arg504–Lys515 are enriched in basic and acidic residues. Over residues Ser521–His540 the composition is skewed to low complexity. Residues Val628–Gln647 are compositionally biased toward basic and acidic residues.

The protein resides in the nucleus. The protein localises to the cytoplasm. Transcription factor that promotes pheromone gene expression, which results in a subsequent increase in cell fusion. Also promotes production of melanin and capsule and thereby is required for full virulence. In Cryptococcus neoformans var. grubii serotype A (strain H99 / ATCC 208821 / CBS 10515 / FGSC 9487) (Filobasidiella neoformans var. grubii), this protein is C2H2 finger domain transcription factor USV101.